The chain runs to 700 residues: Inhibitor of carbonic anhydrase (700 aa).

The first 19 residues, 1 to 19 (MRLLICALLCLGTLGLCLA), serve as a signal peptide directing secretion. Transferrin-like domains are found at residues 25–347 (IRWC…NLKR) and 355–685 (VKWC…NFRQ). Intrachain disulfides connect cysteine 28-cysteine 67, cysteine 38-cysteine 58, cysteine 137-cysteine 213, cysteine 172-cysteine 188, cysteine 175-cysteine 198, cysteine 185-cysteine 196, cysteine 246-cysteine 260, cysteine 358-cysteine 390, cysteine 368-cysteine 381, cysteine 415-cysteine 695, cysteine 438-cysteine 658, cysteine 470-cysteine 545, cysteine 494-cysteine 686, cysteine 504-cysteine 518, cysteine 515-cysteine 528, and cysteine 585-cysteine 599. N-linked (GlcNAc...) asparagine glycosylation is present at asparagine 664.

It belongs to the transferrin family. In terms of assembly, monomer. Interacts (via transferrin-like domain 2) with CA2. Post-translationally, N-glycosylated. Detected in blood plasma, heart, kidney, liver, colon, lung, spleen, pancreas and testis (at protein level).

The protein localises to the secreted. In terms of biological role, inhibitor for carbonic anhydrase 2 (CA2). Does not bind iron ions. The protein is Inhibitor of carbonic anhydrase of Mus musculus (Mouse).